The primary structure comprises 236 residues: Phosphoribosylaminoimidazole-succinocarboxamide synthase (236 aa).

This sequence belongs to the SAICAR synthetase family.

The enzyme catalyses 5-amino-1-(5-phospho-D-ribosyl)imidazole-4-carboxylate + L-aspartate + ATP = (2S)-2-[5-amino-1-(5-phospho-beta-D-ribosyl)imidazole-4-carboxamido]succinate + ADP + phosphate + 2 H(+). The protein operates within purine metabolism; IMP biosynthesis via de novo pathway; 5-amino-1-(5-phospho-D-ribosyl)imidazole-4-carboxamide from 5-amino-1-(5-phospho-D-ribosyl)imidazole-4-carboxylate: step 1/2. This is Phosphoribosylaminoimidazole-succinocarboxamide synthase from Pseudomonas putida (strain ATCC 700007 / DSM 6899 / JCM 31910 / BCRC 17059 / LMG 24140 / F1).